Reading from the N-terminus, the 813-residue chain is Leucine--tRNA ligase (813 aa).

Residues 40 to 51 carry the 'HIGH' region motif; the sequence is SYPSGSKLHAGH. A 'KMSKS' region motif is present at residues 572–576; sequence KMSKS. Position 575 (Lys-575) interacts with ATP.

This sequence belongs to the class-I aminoacyl-tRNA synthetase family.

Its subcellular location is the cytoplasm. The catalysed reaction is tRNA(Leu) + L-leucine + ATP = L-leucyl-tRNA(Leu) + AMP + diphosphate. This is Leucine--tRNA ligase from Clostridium botulinum (strain Langeland / NCTC 10281 / Type F).